A 339-amino-acid polypeptide reads, in one-letter code: MILINLEHILAHISFFLPFLATLVFWGRIVCIDNKRIGSLGNKSIIIAYICITGLLLTRWFHSRHLLLSNLYESFMFLSWSFCLIHIVSEIGSKNDWLGIIIVLIAMLTHGFATVGLPIEMQQSTVLVPALQSHWLIMHVSMMIPSYATLPCGSLLVIALLITTLNKNKNFPILKFNVNSFIWSLILEKKFYLGGSGGDISSRNSSSGNGSDNDSNNNNNKKTFHSLSIDCRKLQLTQQLDYWSYRIISLGSLFLTIGILSGAVWVNEAWGSYWSWDPKETWALITWLLSAIHIHIRMIRGWQGEKPAIIASSGSSIVWFRYLGVNSPEKGLHSYGWLN.

A run of 7 helical transmembrane segments spans residues 6 to 26 (LEHI…LVFW), 37 to 57 (IGSL…GLLL), 71 to 91 (LYES…VSEI), 97 to 117 (WLGI…TVGL), 142 to 162 (MMIP…ALLI), 247 to 267 (IISL…VWVN), and 281 to 299 (TWAL…IRMI).

It belongs to the CcmF/CycK/Ccl1/NrfE/CcsA family. As to quaternary structure, may interact with Ccs1.

It localises to the plastid. The protein localises to the chloroplast thylakoid membrane. In terms of biological role, required during biogenesis of c-type cytochromes (cytochrome c6 and cytochrome f) at the step of heme attachment. This chain is Cytochrome c biogenesis protein CcsA, found in Anthoceros angustus (Hornwort).